The primary structure comprises 102 residues: ATP-dependent Clp protease adapter protein ClpS (102 aa).

The protein belongs to the ClpS family. As to quaternary structure, binds to the N-terminal domain of the chaperone ClpA.

Involved in the modulation of the specificity of the ClpAP-mediated ATP-dependent protein degradation. The sequence is that of ATP-dependent Clp protease adapter protein ClpS from Shewanella oneidensis (strain ATCC 700550 / JCM 31522 / CIP 106686 / LMG 19005 / NCIMB 14063 / MR-1).